Reading from the N-terminus, the 601-residue chain is Aspartate--tRNA(Asp/Asn) ligase (601 aa).

E174 serves as a coordination point for L-aspartate. Residues 198 to 201 (QLFK) are aspartate. R220 is an L-aspartate binding site. Residues 220 to 222 (RDE) and Q229 each bind ATP. H459 contacts L-aspartate. E493 provides a ligand contact to ATP. R500 is an L-aspartate binding site. ATP is bound at residue 545–548 (GLDR).

This sequence belongs to the class-II aminoacyl-tRNA synthetase family. Type 1 subfamily. As to quaternary structure, homodimer.

It is found in the cytoplasm. The enzyme catalyses tRNA(Asx) + L-aspartate + ATP = L-aspartyl-tRNA(Asx) + AMP + diphosphate. Functionally, aspartyl-tRNA synthetase with relaxed tRNA specificity since it is able to aspartylate not only its cognate tRNA(Asp) but also tRNA(Asn). Reaction proceeds in two steps: L-aspartate is first activated by ATP to form Asp-AMP and then transferred to the acceptor end of tRNA(Asp/Asn). This chain is Aspartate--tRNA(Asp/Asn) ligase, found in Variovorax paradoxus (strain S110).